Here is a 420-residue protein sequence, read N- to C-terminus: E3 ubiquitin-protein ligase pellino homolog 2 (420 aa).

The FHA; atypical domain maps to 15–202 (EPVKYGELVV…MHPRGGFTEE (188 aa)).

The protein belongs to the pellino family. In terms of assembly, interacts with TRAF6, IRAK1, IRAK4 and MAP3K7. Interacts with BCL10; this interaction is impaired by SOCS3. Phosphorylated by IRAK1 and IRAK4 enhancing its E3 ligase activity.

It catalyses the reaction S-ubiquitinyl-[E2 ubiquitin-conjugating enzyme]-L-cysteine + [acceptor protein]-L-lysine = [E2 ubiquitin-conjugating enzyme]-L-cysteine + N(6)-ubiquitinyl-[acceptor protein]-L-lysine.. Its pathway is protein modification; protein ubiquitination. Functionally, E3 ubiquitin ligase catalyzing the covalent attachment of ubiquitin moieties onto substrate proteins. Involved in the TLR and IL-1 signaling pathways via interaction with the complex containing IRAK kinases and TRAF6. Mediates IL1B-induced IRAK1 'Lys-63'-linked polyubiquitination and possibly 'Lys-48'-linked ubiquitination. May be important for LPS- and IL1B-induced MAP3K7-dependent, but not MAP3K3-dependent, NF-kappa-B activation. Can activate the MAP (mitogen activated protein) kinase pathway leading to activation of ELK1. This Homo sapiens (Human) protein is E3 ubiquitin-protein ligase pellino homolog 2 (PELI2).